Consider the following 85-residue polypeptide: HssA/B-like protein 62 (85 aa).

This sequence belongs to the hssA/B family.

In Dictyostelium discoideum (Social amoeba), this protein is HssA/B-like protein 62 (hssl62).